We begin with the raw amino-acid sequence, 216 residues long: Large ribosomal subunit protein uL3 (216 aa).

Positions 132-157 (FRGQGASHGTQAVHRKPGSIGGCATP) are disordered.

It belongs to the universal ribosomal protein uL3 family. As to quaternary structure, part of the 50S ribosomal subunit. Forms a cluster with proteins L14 and L19.

Its function is as follows. One of the primary rRNA binding proteins, it binds directly near the 3'-end of the 23S rRNA, where it nucleates assembly of the 50S subunit. This is Large ribosomal subunit protein uL3 from Saccharopolyspora erythraea (strain ATCC 11635 / DSM 40517 / JCM 4748 / NBRC 13426 / NCIMB 8594 / NRRL 2338).